Reading from the N-terminus, the 378-residue chain is Mating-type protein MAT-1 (378 aa).

The segment at residues 60–117 is a DNA-binding region (alpha box); that stretch reads KARKALNAFVGFRCYYITIPMFKPWPMKKLSNLIGLLWEADPNKSLWSLMAKPWSTIR.

This sequence belongs to the MATALPHA1 family.

It is found in the nucleus. In terms of biological role, mating type proteins are sequence specific DNA-binding proteins that act as master switches in fungal differentiation by controlling gene expression in a cell type-specific fashion. Transcriptional activator that induces the transcription of alpha-specific genes. This chain is Mating-type protein MAT-1 (MAT1), found in Cochliobolus sativus (Common root rot and spot blotch fungus).